The primary structure comprises 936 residues: Protein translocase subunit SecA (936 aa).

Residues Q90, 108-112, and D499 contribute to the ATP site; that span reads GEGKT.

This sequence belongs to the SecA family. Monomer and homodimer. Part of the essential Sec protein translocation apparatus which comprises SecA, SecYEG and auxiliary proteins SecDF. Other proteins may also be involved.

Its subcellular location is the cell inner membrane. It localises to the cellular thylakoid membrane. It is found in the cytoplasm. It catalyses the reaction ATP + H2O + cellular proteinSide 1 = ADP + phosphate + cellular proteinSide 2.. Its function is as follows. Part of the Sec protein translocase complex. Interacts with the SecYEG preprotein conducting channel. Has a central role in coupling the hydrolysis of ATP to the transfer of proteins into and across the cell membrane, serving as an ATP-driven molecular motor driving the stepwise translocation of polypeptide chains across the membrane. Functionally, probably participates in protein translocation into and across both the cytoplasmic and thylakoid membranes in cyanobacterial cells. In Trichodesmium erythraeum (strain IMS101), this protein is Protein translocase subunit SecA.